The following is a 144-amino-acid chain: Large ribosomal subunit protein uL16 (144 aa).

The span at 1 to 14 (MLTPKRVKHRKQHR) shows a compositional bias: basic residues. Positions 1–22 (MLTPKRVKHRKQHRPSLAGKAN) are disordered.

It belongs to the universal ribosomal protein uL16 family. As to quaternary structure, part of the 50S ribosomal subunit.

Its function is as follows. Binds 23S rRNA and is also seen to make contacts with the A and possibly P site tRNAs. The polypeptide is Large ribosomal subunit protein uL16 (Syntrophomonas wolfei subsp. wolfei (strain DSM 2245B / Goettingen)).